The chain runs to 131 residues: GKIYEQCELAREFKRHGMDGYHGYSLGDWVCTAKHESNFNTAATNYNRGDQSTDYGILQINSRWWCNDGKTPKAKNACGIECSELLKADITAAVNCAKRIVRDPNGMGAWVAWTKYCKGKDVSQWIKGCKL.

One can recognise a C-type lysozyme domain in the interval 2 to 131 (KIYEQCELAR…VSQWIKGCKL (130 aa)). Disulfide bonds link C7–C129, C31–C117, C66–C82, and C78–C96. Active-site residues include E36 and D54.

It belongs to the glycosyl hydrolase 22 family. As to quaternary structure, monomer.

It is found in the secreted. The enzyme catalyses Hydrolysis of (1-&gt;4)-beta-linkages between N-acetylmuramic acid and N-acetyl-D-glucosamine residues in a peptidoglycan and between N-acetyl-D-glucosamine residues in chitodextrins.. Lysozymes have primarily a bacteriolytic function; those in tissues and body fluids are associated with the monocyte-macrophage system and enhance the activity of immunoagents. Has strong bacteriolytic activity against M.luteus and V.cholerae, weak bacteriolytic activity against P.aeruginosa and no activity against A.hydrophila. The sequence is that of Lysozyme C (LYZ) from Pelodiscus sinensis (Chinese softshell turtle).